A 101-amino-acid chain; its full sequence is ATP-dependent Clp protease adapter protein ClpS 2 (101 aa).

It belongs to the ClpS family. Binds to the N-terminal domain of the chaperone ClpA.

Functionally, involved in the modulation of the specificity of the ClpAP-mediated ATP-dependent protein degradation. This is ATP-dependent Clp protease adapter protein ClpS 2 from Mesorhizobium japonicum (strain LMG 29417 / CECT 9101 / MAFF 303099) (Mesorhizobium loti (strain MAFF 303099)).